An 89-amino-acid polypeptide reads, in one-letter code: Small ribosomal subunit protein uS15 (89 aa).

This sequence belongs to the universal ribosomal protein uS15 family. In terms of assembly, part of the 30S ribosomal subunit. Forms a bridge to the 50S subunit in the 70S ribosome, contacting the 23S rRNA.

Its function is as follows. One of the primary rRNA binding proteins, it binds directly to 16S rRNA where it helps nucleate assembly of the platform of the 30S subunit by binding and bridging several RNA helices of the 16S rRNA. Forms an intersubunit bridge (bridge B4) with the 23S rRNA of the 50S subunit in the ribosome. The sequence is that of Small ribosomal subunit protein uS15 from Chlamydia muridarum (strain MoPn / Nigg).